A 235-amino-acid polypeptide reads, in one-letter code: Segregation and condensation protein A (235 aa).

Belongs to the ScpA family. As to quaternary structure, component of a cohesin-like complex composed of ScpA, ScpB and the Smc homodimer, in which ScpA and ScpB bind to the head domain of Smc. The presence of the three proteins is required for the association of the complex with DNA.

It localises to the cytoplasm. Its function is as follows. Participates in chromosomal partition during cell division. May act via the formation of a condensin-like complex containing Smc and ScpB that pull DNA away from mid-cell into both cell halves. The sequence is that of Segregation and condensation protein A from Streptococcus equi subsp. zooepidemicus (strain MGCS10565).